A 727-amino-acid polypeptide reads, in one-letter code: 1,4-alpha-glucan branching enzyme GlgB (727 aa).

D405 acts as the Nucleophile in catalysis. E458 functions as the Proton donor in the catalytic mechanism.

It belongs to the glycosyl hydrolase 13 family. GlgB subfamily. As to quaternary structure, monomer.

It carries out the reaction Transfers a segment of a (1-&gt;4)-alpha-D-glucan chain to a primary hydroxy group in a similar glucan chain.. The protein operates within glycan biosynthesis; glycogen biosynthesis. In terms of biological role, catalyzes the formation of the alpha-1,6-glucosidic linkages in glycogen by scission of a 1,4-alpha-linked oligosaccharide from growing alpha-1,4-glucan chains and the subsequent attachment of the oligosaccharide to the alpha-1,6 position. The sequence is that of 1,4-alpha-glucan branching enzyme GlgB from Yersinia pestis bv. Antiqua (strain Antiqua).